Consider the following 235-residue polypeptide: Intron-encoded endonuclease I-SceI (235 aa).

The protein belongs to the LAGLIDADG endonuclease family. Monomer. The cofactor is Mg(2+).

It is found in the mitochondrion. Functionally, mitochondrial DNA endonuclease involved in intron homing. It introduces a specific double-strand break in the DNA of the 21S rRNA gene and thus mediates the insertion of an intron, containing its own coding sequence (group I intron), into an intronless gene. Specifically recognizes and cleaves the sequence 5'-TAGGGATAACAGGGTAAT-3'. The sequence is that of Intron-encoded endonuclease I-SceI (SCEI) from Saccharomyces cerevisiae (strain ATCC 204508 / S288c) (Baker's yeast).